The primary structure comprises 550 residues: uncharacterized protein (550 aa).

The first 53 residues, methionine 1–arginine 53, serve as a signal peptide directing secretion. 2 N-linked (GlcNAc...) asparagine glycosylation sites follow: asparagine 296 and asparagine 518.

It is found in the endoplasmic reticulum. This is an uncharacterized protein from Schizosaccharomyces pombe (strain 972 / ATCC 24843) (Fission yeast).